The following is a 178-amino-acid chain: ATP-dependent protease subunit HslV (178 aa).

Thr-7 is a catalytic residue. Na(+) contacts are provided by Gly-162, Cys-165, and Thr-168.

It belongs to the peptidase T1B family. HslV subfamily. In terms of assembly, a double ring-shaped homohexamer of HslV is capped on each side by a ring-shaped HslU homohexamer. The assembly of the HslU/HslV complex is dependent on binding of ATP.

The protein localises to the cytoplasm. It catalyses the reaction ATP-dependent cleavage of peptide bonds with broad specificity.. With respect to regulation, allosterically activated by HslU binding. Its function is as follows. Protease subunit of a proteasome-like degradation complex believed to be a general protein degrading machinery. The polypeptide is ATP-dependent protease subunit HslV (Dechloromonas aromatica (strain RCB)).